A 34-amino-acid chain; its full sequence is Sperm protein EM1 (34 aa).

The segment covering 1–17 (AGSKSRSRSRSRSRSKS) has biased composition (basic residues). The tract at residues 1-34 (AGSKSRSRSRSRSRSKSPAKSASPKSAASPRASR) is disordered. Tandem repeats lie at residues 3-4 (SK), 5-6 (SR), 7-8 (SR), 9-10 (SR), 11-12 (SR), 13-14 (SR), and 15-16 (SK). The interval 3-16 (SKSRSRSRSRSRSK) is 7 X 2 AA tandem repeats of S-[KR]. Positions 18-34 (PAKSASPKSAASPRASR) are enriched in low complexity.

As to expression, sperm.

Its subcellular location is the nucleus. The sequence is that of Sperm protein EM1 from Ensis minor (Razor shell).